The following is a 206-amino-acid chain: Ribosomal RNA large subunit methyltransferase E (206 aa).

5 residues coordinate S-adenosyl-L-methionine: Gly60, Trp62, Asp80, Asp96, and Asp121. Lys161 (proton acceptor) is an active-site residue.

This sequence belongs to the class I-like SAM-binding methyltransferase superfamily. RNA methyltransferase RlmE family.

The protein localises to the cytoplasm. It catalyses the reaction uridine(2552) in 23S rRNA + S-adenosyl-L-methionine = 2'-O-methyluridine(2552) in 23S rRNA + S-adenosyl-L-homocysteine + H(+). Functionally, specifically methylates the uridine in position 2552 of 23S rRNA at the 2'-O position of the ribose in the fully assembled 50S ribosomal subunit. The sequence is that of Ribosomal RNA large subunit methyltransferase E from Stutzerimonas stutzeri (strain A1501) (Pseudomonas stutzeri).